Consider the following 212-residue polypeptide: Ribosomal RNA small subunit methyltransferase G (212 aa).

Residues Gly80, Leu85, 131–132 (AE), and Arg146 each bind S-adenosyl-L-methionine.

It belongs to the methyltransferase superfamily. RNA methyltransferase RsmG family.

It localises to the cytoplasm. The catalysed reaction is guanosine(527) in 16S rRNA + S-adenosyl-L-methionine = N(7)-methylguanosine(527) in 16S rRNA + S-adenosyl-L-homocysteine. Specifically methylates the N7 position of guanine in position 527 of 16S rRNA. This chain is Ribosomal RNA small subunit methyltransferase G, found in Xanthomonas axonopodis pv. citri (strain 306).